The sequence spans 64 residues: Probable tautomerase lp_1712 (64 aa).

P2 acts as the Proton acceptor; via imino nitrogen in catalysis.

Belongs to the 4-oxalocrotonate tautomerase family.

This is Probable tautomerase lp_1712 from Lactiplantibacillus plantarum (strain ATCC BAA-793 / NCIMB 8826 / WCFS1) (Lactobacillus plantarum).